The chain runs to 380 residues: NF-kappa-B inhibitor-like protein 1 (380 aa).

The tract at residues 1–34 is disordered; it reads MSNPSPQVPEEEASTSVCRPKSSMASTSRRQRRE. ANK repeat units follow at residues 64–93 and 97–133; these read GQPPPLHRACARHDAPALCLLLRLGADPAH and HGDTALHAAARQGPDAYTDFFLPLLSRCPSAMGIKNK. Disordered stretches follow at residues 131 to 166 and 185 to 293; these read KNKDGETPGQILGWGPPWDSAEEEEDDASKEREWRQ and GDAS…RGSL. Phosphoserine is present on serine 150. The span at 237–286 shows a compositional bias: basic and acidic residues; sequence QQEEEQRLFRERARAKEEELRESRARRAQEALGDREPKPTRAGPREEHPR.

As to quaternary structure, interacts with CACTIN (via N-terminal domain); the interaction occurs in a pro-inflammatory-independent manner.

The protein localises to the nucleus. Involved in the regulation of innate immune response. Acts as negative regulator of Toll-like receptor and interferon-regulatory factor (IRF) signaling pathways. Contributes to the negative regulation of transcriptional activation of NF-kappa-B target genes in response to endogenous pro-inflammatory stimuli. The chain is NF-kappa-B inhibitor-like protein 1 (NFKBIL1) from Pan troglodytes (Chimpanzee).